The chain runs to 226 residues: Matrix protein (226 aa).

The dynamin binding motif lies at 2-4 (KSL). The PPXY motif motif lies at 28–31 (PPSY). The short motif at 40–43 (PSAP) is the PTAP/PSAP motif element.

It belongs to the vesiculoviruses matrix protein family. Homomultimer. Interacts with viral nucleocapsid; this interaction contributes to the virion assembly. Interacts with the viral envelope glycoprotein; this interaction contributes to the virion assembly. Interacts with host RAE1-NUP98 complex. Interacts with host NEDD4 and TSG101. Interacts with host dynamin. Interacts with host NDUFAF4; the interaction inhibits viral propagation and is independent of interferon activation. Interacts with host GTF2H5; the interaction may inhibit host transcription. Post-translationally, phosphorylated by host.

The protein localises to the virion. The protein resides in the host endomembrane system. It localises to the host nucleus membrane. Its subcellular location is the host nucleus. It is found in the host cytoplasm. Forms a double layer around the helical nucleocapsid, the inner matrix layer binding to the N helix and the outer matrix layer binding to the envelope glycoprotein. Plays a major role in assembly and budding of virion, by recruiting cellular partners of the ESCRT complexes that play a key role in releasing the budding particle from the host membrane. Condensates the ribonucleocapsid core during virus assembly. Inhibits the host mRNA nuclear export thereby inducing the shut off of cellular transcription and preventing the interferon signaling and the establishment of antiviral state in infected cells. This shutoff presumably inhibits interferon signaling and thus establishment of antiviral state in virus infected cells. Induces cell-rounding, cytoskeleton disorganization and apoptosis in infected cell. Inhibits host transcription, possibly through interaction with host DNA repair factor IIH/TFIIH GTF2H5 subunit. The chain is Matrix protein (M) from Isfahan virus (ISFV).